A 342-amino-acid chain; its full sequence is tRNA N6-adenosine threonylcarbamoyltransferase (342 aa).

Fe cation is bound by residues H111 and H115. Residues 134 to 138 (LVSGG), D167, G180, and N277 contribute to the substrate site. Residue D305 coordinates Fe cation.

The protein belongs to the KAE1 / TsaD family. Fe(2+) is required as a cofactor.

It localises to the cytoplasm. The enzyme catalyses L-threonylcarbamoyladenylate + adenosine(37) in tRNA = N(6)-L-threonylcarbamoyladenosine(37) in tRNA + AMP + H(+). Required for the formation of a threonylcarbamoyl group on adenosine at position 37 (t(6)A37) in tRNAs that read codons beginning with adenine. Is involved in the transfer of the threonylcarbamoyl moiety of threonylcarbamoyl-AMP (TC-AMP) to the N6 group of A37, together with TsaE and TsaB. TsaD likely plays a direct catalytic role in this reaction. In Histophilus somni (strain 2336) (Haemophilus somnus), this protein is tRNA N6-adenosine threonylcarbamoyltransferase.